The following is a 350-amino-acid chain: MDINLFDFHLPEELIAQVPLEERETSRLMVLDRETGDIEHKHFTDILSYLHEGDCLVLNETKVMPARLHGVKEDPGAHIEVLLLKQEEGDKWETLVKPAKRVKEGTVISFGEGKLKATCTGTADQGGRQLEFSYDGIFYEILDELGEMPLPPYIKETLEDRDRYQTVYAKEIGSAAAPTAGLHFTEELLEKLKQKGVELAFITLHVGLGTFRPVSADTIEEHHMHAEYYHMSEETAALLNRVKENGGRIITVGTTSTRTLETIATDHDGKLCAASGWTDIFMYPGYEFKAIDGLITNFHLPKSTLIMLVSAFANRDNVLHAYNEAVKEKYRFFSFGDAMFVASHAKMGNK.

The protein belongs to the QueA family. As to quaternary structure, monomer.

The protein localises to the cytoplasm. The enzyme catalyses 7-aminomethyl-7-carbaguanosine(34) in tRNA + S-adenosyl-L-methionine = epoxyqueuosine(34) in tRNA + adenine + L-methionine + 2 H(+). It participates in tRNA modification; tRNA-queuosine biosynthesis. Its function is as follows. Transfers and isomerizes the ribose moiety from AdoMet to the 7-aminomethyl group of 7-deazaguanine (preQ1-tRNA) to give epoxyqueuosine (oQ-tRNA). The polypeptide is S-adenosylmethionine:tRNA ribosyltransferase-isomerase (Bacillus cereus (strain Q1)).